The chain runs to 107 residues: Ig kappa chain V-VI region J539 (107 aa).

Residues 1 to 23 (EIVLTQSPAITAASLGQKVTITC) are framework-1. Residues Cys23 and Cys87 are joined by a disulfide bond. Residues 24 to 33 (SASSSVSSLH) form a complementarity-determining-1 region. The segment at 34-48 (WYQQKSGTSPKPWIY) is framework-2. The tract at residues 49–55 (EISKLAS) is complementarity-determining-2. The tract at residues 56 to 87 (GVPARFSGSGSGTSYSLTINTMEAEDAAIYYC) is framework-3. The interval 88 to 96 (QQWTYPLIT) is complementarity-determining-3. The interval 97–106 (FGAGTKLELK) is framework-4.

The polypeptide is Ig kappa chain V-VI region J539 (Mus musculus (Mouse)).